We begin with the raw amino-acid sequence, 336 residues long: Fructose-1,6-bisphosphatase class 1 (336 aa).

Mg(2+) is bound by residues Glu-92, Asp-115, Leu-117, and Asp-118. Substrate is bound by residues 118–121, Asn-211, Tyr-244, 262–264, and Lys-274; these read DGSS and YLY. A Mg(2+)-binding site is contributed by Glu-280.

This sequence belongs to the FBPase class 1 family. As to quaternary structure, homotetramer. Requires Mg(2+) as cofactor.

It is found in the cytoplasm. It catalyses the reaction beta-D-fructose 1,6-bisphosphate + H2O = beta-D-fructose 6-phosphate + phosphate. It participates in carbohydrate biosynthesis; gluconeogenesis. This Hahella chejuensis (strain KCTC 2396) protein is Fructose-1,6-bisphosphatase class 1.